Reading from the N-terminus, the 294-residue chain is tRNA pseudouridine synthase B (294 aa).

Catalysis depends on aspartate 38, which acts as the Nucleophile.

The protein belongs to the pseudouridine synthase TruB family. Type 1 subfamily.

It catalyses the reaction uridine(55) in tRNA = pseudouridine(55) in tRNA. Its function is as follows. Responsible for synthesis of pseudouridine from uracil-55 in the psi GC loop of transfer RNAs. The polypeptide is tRNA pseudouridine synthase B (Clostridium perfringens (strain ATCC 13124 / DSM 756 / JCM 1290 / NCIMB 6125 / NCTC 8237 / Type A)).